Reading from the N-terminus, the 508-residue chain is Light-independent protochlorophyllide reductase subunit B (508 aa).

Aspartate 36 is a [4Fe-4S] cluster binding site. Aspartate 294 (proton donor) is an active-site residue. A substrate-binding site is contributed by 429 to 430 (GM).

The protein belongs to the ChlB/BchB/BchZ family. In terms of assembly, protochlorophyllide reductase is composed of three subunits; ChlL, ChlN and ChlB. Forms a heterotetramer of two ChlB and two ChlN subunits. [4Fe-4S] cluster serves as cofactor.

It carries out the reaction chlorophyllide a + oxidized 2[4Fe-4S]-[ferredoxin] + 2 ADP + 2 phosphate = protochlorophyllide a + reduced 2[4Fe-4S]-[ferredoxin] + 2 ATP + 2 H2O. Its pathway is porphyrin-containing compound metabolism; chlorophyll biosynthesis (light-independent). Functionally, component of the dark-operative protochlorophyllide reductase (DPOR) that uses Mg-ATP and reduced ferredoxin to reduce ring D of protochlorophyllide (Pchlide) to form chlorophyllide a (Chlide). This reaction is light-independent. The NB-protein (ChlN-ChlB) is the catalytic component of the complex. This Gloeothece citriformis (strain PCC 7424) (Cyanothece sp. (strain PCC 7424)) protein is Light-independent protochlorophyllide reductase subunit B.